Here is a 263-residue protein sequence, read N- to C-terminus: Small ribosomal subunit protein eS4 (263 aa).

The S4 RNA-binding domain occupies 42-104 (LPLIIFLRNR…TGENFRLIYD (63 aa)).

The protein belongs to the eukaryotic ribosomal protein eS4 family.

The polypeptide is Small ribosomal subunit protein eS4 (rps4) (Ictalurus punctatus (Channel catfish)).